The following is a 541-amino-acid chain: Glycogen synthase (541 aa).

Residue Lys17 participates in ADP-alpha-D-glucose binding. A disordered region spans residues 497–541; sequence LARPASPPDTAPVGKPARRRRTTALSTTARAHPVARAAGREKIRA.

This sequence belongs to the glycosyltransferase 1 family. Bacterial/plant glycogen synthase subfamily.

It carries out the reaction [(1-&gt;4)-alpha-D-glucosyl](n) + ADP-alpha-D-glucose = [(1-&gt;4)-alpha-D-glucosyl](n+1) + ADP + H(+). Its pathway is glycan biosynthesis; glycogen biosynthesis. In terms of biological role, synthesizes alpha-1,4-glucan chains using ADP-glucose. This Ralstonia nicotianae (strain ATCC BAA-1114 / GMI1000) (Ralstonia solanacearum) protein is Glycogen synthase.